The following is a 116-amino-acid chain: Protein Wnt-5a (116 aa).

Serine 1 carries O-palmitoleoyl serine; by PORCN lipidation. Asparagine 69 and asparagine 83 each carry an N-linked (GlcNAc...) asparagine glycan. Cysteines 82 and 97 form a disulfide.

Belongs to the Wnt family. Post-translationally, palmitoleoylation is required for efficient binding to frizzled receptors. Depalmitoleoylation leads to Wnt signaling pathway inhibition.

The protein localises to the secreted. The protein resides in the extracellular space. Its subcellular location is the extracellular matrix. Ligand for members of the frizzled family of seven transmembrane receptors. Can activate or inhibit canonical Wnt signaling, depending on receptor context. Required during embryogenesis for extension of the primary anterior-posterior axis. In Anser caerulescens (Snow goose), this protein is Protein Wnt-5a (WNT5A).